The chain runs to 161 residues: Cyclic pyranopterin monophosphate synthase (161 aa).

Residues 73-75 (LCH) and 110-111 (ME) each bind substrate. Asp125 is a catalytic residue.

This sequence belongs to the MoaC family. Homohexamer; trimer of dimers.

The enzyme catalyses (8S)-3',8-cyclo-7,8-dihydroguanosine 5'-triphosphate = cyclic pyranopterin phosphate + diphosphate. The protein operates within cofactor biosynthesis; molybdopterin biosynthesis. In terms of biological role, catalyzes the conversion of (8S)-3',8-cyclo-7,8-dihydroguanosine 5'-triphosphate to cyclic pyranopterin monophosphate (cPMP). This Pseudomonas syringae pv. syringae (strain B728a) protein is Cyclic pyranopterin monophosphate synthase.